The sequence spans 228 residues: Cytidylate kinase (228 aa).

7-15 (GPVATGKST) is an ATP binding site.

The protein belongs to the cytidylate kinase family. Type 1 subfamily.

It localises to the cytoplasm. It catalyses the reaction CMP + ATP = CDP + ADP. The catalysed reaction is dCMP + ATP = dCDP + ADP. In Protochlamydia amoebophila (strain UWE25), this protein is Cytidylate kinase.